The chain runs to 292 residues: Aspartate carbamoyltransferase catalytic subunit (292 aa).

Carbamoyl phosphate contacts are provided by arginine 49 and threonine 50. Lysine 77 contributes to the L-aspartate binding site. Carbamoyl phosphate is bound by residues arginine 99, histidine 127, and glutamine 130. L-aspartate-binding residues include arginine 161 and arginine 211. Carbamoyl phosphate-binding residues include glycine 250 and proline 251.

It belongs to the aspartate/ornithine carbamoyltransferase superfamily. ATCase family. As to quaternary structure, heterododecamer (2C3:3R2) of six catalytic PyrB chains organized as two trimers (C3), and six regulatory PyrI chains organized as three dimers (R2).

It catalyses the reaction carbamoyl phosphate + L-aspartate = N-carbamoyl-L-aspartate + phosphate + H(+). It participates in pyrimidine metabolism; UMP biosynthesis via de novo pathway; (S)-dihydroorotate from bicarbonate: step 2/3. In terms of biological role, catalyzes the condensation of carbamoyl phosphate and aspartate to form carbamoyl aspartate and inorganic phosphate, the committed step in the de novo pyrimidine nucleotide biosynthesis pathway. The chain is Aspartate carbamoyltransferase catalytic subunit from Campylobacter lari (strain RM2100 / D67 / ATCC BAA-1060).